Here is a 426-residue protein sequence, read N- to C-terminus: D-tagatose-1,6-bisphosphate aldolase subunit KbaZ (426 aa).

This sequence belongs to the GatZ/KbaZ family. KbaZ subfamily. Forms a complex with KbaY.

It participates in carbohydrate metabolism; D-tagatose 6-phosphate degradation; D-glyceraldehyde 3-phosphate and glycerone phosphate from D-tagatose 6-phosphate: step 2/2. Its function is as follows. Component of the tagatose-1,6-bisphosphate aldolase KbaYZ that is required for full activity and stability of the Y subunit. Could have a chaperone-like function for the proper and stable folding of KbaY. When expressed alone, KbaZ does not show any aldolase activity. This chain is D-tagatose-1,6-bisphosphate aldolase subunit KbaZ, found in Escherichia coli O1:K1 / APEC.